A 266-amino-acid polypeptide reads, in one-letter code: Basic endochitinase C (266 aa).

A signal peptide spans 1–23; the sequence is MRSLAVVVAVVATVAMAIGTAHG. 3 disulfide bridges follow: cysteine 46–cysteine 108, cysteine 120–cysteine 128, and cysteine 246–cysteine 259. Residue glutamate 90 is the Proton donor of the active site.

It belongs to the glycosyl hydrolase 19 family. Chitinase class II subfamily. As to expression, localized to the starchy endoderm of the seed May localize to other parts of the seed including the aleurone cells (at protein level).

It catalyses the reaction Random endo-hydrolysis of N-acetyl-beta-D-glucosaminide (1-&gt;4)-beta-linkages in chitin and chitodextrins.. Functionally, defense against chitin-containing fungal pathogens. Binds the hyphal tips of fungi and degrades nascent chitin. This chain is Basic endochitinase C, found in Secale cereale (Rye).